The sequence spans 405 residues: L-carnitine CoA-transferase (405 aa).

CoA-binding residues include lysine 97 and arginine 104. The Nucleophile role is filled by aspartate 169.

Belongs to the CoA-transferase III family. CaiB subfamily. As to quaternary structure, homodimer.

It localises to the cytoplasm. It catalyses the reaction crotonobetainyl-CoA + (R)-carnitine = crotonobetaine + (R)-carnitinyl-CoA. It carries out the reaction 4-(trimethylamino)butanoyl-CoA + (R)-carnitine = (R)-carnitinyl-CoA + 4-(trimethylamino)butanoate. Its pathway is amine and polyamine metabolism; carnitine metabolism. Catalyzes the reversible transfer of the CoA moiety from gamma-butyrobetainyl-CoA to L-carnitine to generate L-carnitinyl-CoA and gamma-butyrobetaine. Is also able to catalyze the reversible transfer of the CoA moiety from gamma-butyrobetainyl-CoA or L-carnitinyl-CoA to crotonobetaine to generate crotonobetainyl-CoA. This Escherichia coli (strain SE11) protein is L-carnitine CoA-transferase.